The chain runs to 866 residues: Ribosome biogenesis protein BOP1 homolog (866 aa).

Disordered regions lie at residues 1–180 and 214–241; these read MVAN…EETR and PPEA…EEDI. 3 stretches are compositionally biased toward acidic residues: residues 37-52, 60-146, and 167-179; these read VDDE…DEEN, GNDE…LEEP, and TAED…DEET. 6 WD repeats span residues 527–566, 568–608, 697–735, 738–777, 781–820, and 836–866; these read GHTD…CIRT, PTGD…SLLV, KSKG…LLKK, PSCK…RPYQ, LHHS…DLLQ, and VNDF…RLYT.

The protein belongs to the WD repeat BOP1/ERB1 family.

It is found in the nucleus. Its subcellular location is the nucleolus. It localises to the nucleoplasm. Its function is as follows. Required for maturation of ribosomal RNAs and formation of the large ribosomal subunit. This is Ribosome biogenesis protein BOP1 homolog from Aedes aegypti (Yellowfever mosquito).